Here is a 252-residue protein sequence, read N- to C-terminus: Ribosomal RNA small subunit methyltransferase A (252 aa).

Residues Asn-10, Leu-12, Gly-36, Glu-57, Asp-81, and Asn-98 each contribute to the S-adenosyl-L-methionine site.

It belongs to the class I-like SAM-binding methyltransferase superfamily. rRNA adenine N(6)-methyltransferase family. RsmA subfamily.

The protein localises to the cytoplasm. It carries out the reaction adenosine(1518)/adenosine(1519) in 16S rRNA + 4 S-adenosyl-L-methionine = N(6)-dimethyladenosine(1518)/N(6)-dimethyladenosine(1519) in 16S rRNA + 4 S-adenosyl-L-homocysteine + 4 H(+). Specifically dimethylates two adjacent adenosines (A1518 and A1519) in the loop of a conserved hairpin near the 3'-end of 16S rRNA in the 30S particle. May play a critical role in biogenesis of 30S subunits. The chain is Ribosomal RNA small subunit methyltransferase A from Mycoplasmopsis pulmonis (strain UAB CTIP) (Mycoplasma pulmonis).